The following is a 102-amino-acid chain: Antimicrobial peptide 1 (102 aa).

An N-terminal signal peptide occupies residues 1–26; the sequence is MASTKLFFSVITVMMLIAMASEMVNG. Disulfide bonds link Cys-37–Cys-90, Cys-47–Cys-102, and Cys-49–Cys-75.

It is found in the secreted. Functionally, antimicrobial peptide which inhibits the growth of a variety of fungi, oomycetes, Gram-positive bacterial phytopatogenes and S.cerevisiae in vitro. No activity against E.coli. This is Antimicrobial peptide 1 from Macadamia integrifolia (Macadamia nut).